The sequence spans 105 residues: Platelet factor 4 (105 aa).

Residues 1–29 (MSAAAVFRGLRPSPELLLLGLLLLPAVVA) form the signal peptide. O-linked (GalNAc...) threonine; partial glycosylation is present at threonine 31. 2 disulfide bridges follow: cysteine 44–cysteine 71 and cysteine 46–cysteine 87. At serine 61 the chain carries Phosphoserine. Heparin is bound at residue 96–102 (KKIIKKL).

This sequence belongs to the intercrine alpha (chemokine CxC) family. In terms of assembly, homotetramer. Interacts with TNFAIP6 (via Link domain). Interacts with CCR1. Interacts with CXCR3. Interacts with THBD; this interaction enhances generation of activated protein C. O-linked glycan consists of Gal-GalNAc disaccharide which is modified with sialic acid residues (microheterogeneity).

Its subcellular location is the secreted. Functionally, chemokine released during platelet aggregation that plays a role in different biological processes including hematopoiesis, cell proliferation, differentiation, and activation. Acts via different functional receptors including CCR1, CXCR3A or CXCR3B. Upon interaction with CXCR3A receptor, induces activated T-lymphocytes migration mediated via downstream Ras/extracellular signal-regulated kinase (ERK) signaling. Neutralizes the anticoagulant effect of heparin by binding more strongly to heparin than to the chondroitin-4-sulfate chains of the carrier molecule. Plays a role in the inhibition of hematopoiesis and in the maintenance of hematopoietic stem cell (HSC) quiescence. Chemotactic for neutrophils and monocytes via CCR1. Inhibits endothelial cell proliferation. In cooperation with toll-like receptor 8/TLR8, induces chromatin remodeling and activates inflammatory gene expression via the TBK1-IRF5 axis. In addition, induces myofibroblast differentiation and collagen synthesis in different precursor cells, including endothelial cells, by stimulating endothelial-to-mesenchymal transition. Interacts with thrombomodulin/THBD to enhance the activation of protein C and thus potentiates its anticoagulant activity. The sequence is that of Platelet factor 4 (Pf4) from Rattus norvegicus (Rat).